The following is a 407-amino-acid chain: Phosphopentomutase (407 aa).

Residues D10, D306, H311, D347, H348, and H359 each coordinate Mn(2+).

The protein belongs to the phosphopentomutase family. Mn(2+) serves as cofactor.

It localises to the cytoplasm. The catalysed reaction is 2-deoxy-alpha-D-ribose 1-phosphate = 2-deoxy-D-ribose 5-phosphate. It carries out the reaction alpha-D-ribose 1-phosphate = D-ribose 5-phosphate. Its pathway is carbohydrate degradation; 2-deoxy-D-ribose 1-phosphate degradation; D-glyceraldehyde 3-phosphate and acetaldehyde from 2-deoxy-alpha-D-ribose 1-phosphate: step 1/2. Its function is as follows. Isomerase that catalyzes the conversion of deoxy-ribose 1-phosphate (dRib-1-P) and ribose 1-phosphate (Rib-1-P) to deoxy-ribose 5-phosphate (dRib-5-P) and ribose 5-phosphate (Rib-5-P), respectively. The protein is Phosphopentomutase of Yersinia pestis bv. Antiqua (strain Angola).